The sequence spans 887 residues: PAN2-PAN3 deadenylation complex subunit PAN3 (887 aa).

The C3H1-type zinc-finger motif lies at Gly-43–Pro-71. Disordered regions lie at residues Ala-102–Met-147, Gln-284–Ser-307, and Ser-325–Val-392. The segment covering Pro-122 to Asp-138 has biased composition (gly residues). Positions Met-147–Ser-498 are necessary and sufficient for interaction with PABPC1 but not needed for interaction with PAN2. Positions Gln-284–Ser-299 match the PABPC-interacting motif-2 (PAM-2) motif. A compositionally biased stretch (polar residues) spans Gly-298–Ser-307. Residues Ser-354 and Ser-361 each carry the phosphoserine modification. Polar residues predominate over residues Thr-363–Val-392. A pseudokinase domain region spans residues Gln-463–Gly-750. ATP is bound by residues Arg-521, Asp-570 to Thr-577, and Thr-644 to Lys-645. Residues Ala-751–Thr-789 adopt a coiled-coil conformation. The interval Ile-790–Leu-887 is knob domain.

This sequence belongs to the protein kinase superfamily. PAN3 family. In terms of assembly, homodimer. Forms a heterotrimer with a catalytic subunit PAN2 to form the poly(A)-nuclease (PAN) deadenylation complex. Interacts (via PAM-2 motif) with poly(A)-binding protein PABPC1 (via PABC domain), conferring substrate specificity of the enzyme complex. Interacts with the GW182 family proteins TNRC6A, TNRC6B and TNRC6. Interacts with YTHDF3. Interacts with PAN2. Interacts (via N-terminus) with PABPC1 at lower efficiency than isoform 3. As to quaternary structure, interacts with PAN2. Interacts (via N-terminus) with PABPC1 at higher efficiency than isoform 1.

Its subcellular location is the cytoplasm. The protein localises to the P-body. The protein resides in the nucleus. In terms of biological role, regulatory subunit of the poly(A)-nuclease (PAN) deadenylation complex, one of two cytoplasmic mRNA deadenylases involved in general and miRNA-mediated mRNA turnover. PAN specifically shortens poly(A) tails of RNA and the activity is stimulated by poly(A)-binding protein (PABP). PAN deadenylation is followed by rapid degradation of the shortened mRNA tails by the CCR4-NOT complex. Deadenylated mRNAs are then degraded by two alternative mechanisms, namely exosome-mediated 3'-5' exonucleolytic degradation, or deadenylation-dependent mRNA decapping and subsequent 5'-3' exonucleolytic degradation by XRN1. PAN3 acts as a regulator for PAN activity, recruiting the catalytic subunit PAN2 to mRNA via its interaction with RNA and PABP, and to miRNA targets via its interaction with GW182 family proteins. Functionally, decreases PAN2-mediated deadenylation, possibly by preventing progression into the second CCR4-NOT mediated stage of biphasic deadenylation. Has a significant effect on mRNA stability, generally stabilizing a subset of the transcriptome. Stabilizes mRNAs degraded by the AU-rich element (ARE)-mediated mRNA decay pathway but promotes degradation of mRNAs by the microRNA-mediated pathway. Its activity influences mRNP remodeling, specifically reducing formation of a subset of P-bodies containing GW220, an isoform of TNRC6A. Enhances PAN2 deadenylase activity and has an extensive effect on mRNA stability, generally enhancing mRNA decay across the transcriptome by multiple pathways, including the AU-rich element (ARE)-mediated pathway, microRNA-mediated pathway and the nonsense-mediated pathway (NMD). Its activity is required for efficient P-body formation. May be involved in regulating mRNAs of genes involved in cell cycle progression and cell proliferation. The protein is PAN2-PAN3 deadenylation complex subunit PAN3 of Homo sapiens (Human).